We begin with the raw amino-acid sequence, 92 residues long: Large ribosomal subunit protein eL43 (92 aa).

A C4-type zinc finger spans residues 39–60; that stretch reads CDFCGKYGMKRKAVGIWSCKGC.

The protein belongs to the eukaryotic ribosomal protein eL43 family.

In Ostreococcus lucimarinus (strain CCE9901), this protein is Large ribosomal subunit protein eL43 (RPL37a).